Here is an 853-residue protein sequence, read N- to C-terminus: Histone-lysine N-methyltransferase PRDM9 (853 aa).

An SET domain is found at 83–197 (QGLVIGRSSI…PGQEFRVWYA (115 aa)). Substrate is bound by residues 127–133 (DSANSWV) and Tyr-196. The segment at 230–253 (CPCPFCHYSFPTLVYLHAHVKRTH) adopts a C2H2-type 1 zinc-finger fold. Cys-235 provides a ligand contact to Zn(2+). 275 to 277 (TEV) is an S-adenosyl-L-methionine binding site. Polar residues predominate over residues 291 to 314 (QTQPVTESPQEQISTQNGQPIHQT). A disordered region spans residues 291–322 (QTQPVTESPQEQISTQNGQPIHQTENSDEPDA). 3 consecutive C2H2-type zinc fingers follow at residues 337–360 (HACVDCGRSFLRSCHLKRHQRTIH), 366–388 (YCCSQCKKCFSQATGLKRHQHTH), and 405–428 (YPCTKCTLSFVAKINLHQHLKRHH). S-adenosyl-L-methionine is bound at residue 341-342 (DC). Zn(2+) contacts are provided by Cys-407, Cys-410, His-423, and His-428. Residues 447 to 496 (EDHTEVCFDKQDPNYEPPSRGRKSTKNSLKGRGCPKKVAVGRPRGRPPKN) are disordered. A compositionally biased stretch (basic and acidic residues) spans 450-459 (TEVCFDKQDP). The C2H2-type 5; degenerate zinc finger occupies 508–528 (PICTNCEQSFSDLETLKTHQC). A C2H2-type 6; degenerate zinc finger spans residues 547–569 (YICGECIRAFSNLDLLKAHECIQ). C2H2-type zinc fingers lie at residues 575–598 (YCCPHCDLYFNRMCNLRRHERTIH), 604–626 (YCCTVCLKSFTQSSGLKRHQQSH), and 644–666 (FPCAYCPFSFTDERYLYKHIRRH). The segment at 689–711 (HSCSQCCKSFSTIKGFKNHSCFK) adopts a C2H2-type 10; degenerate zinc-finger fold. 5 consecutive C2H2-type zinc fingers follow at residues 717-739 (YLCPDCGKAFSWFNSLKQHQRIH), 745-767 (YTCSQCGKSFVHSGQLNVHLRTH), 773-795 (FLCSQCGESFRQSGDLRRHEQKH), 801-823 (CQCPDCGKSFSRPQSLKAHQQLH), and 829-852 (FPCTQCGKSFTRRYHLTRHHQKMH). Zn(2+)-binding residues include Cys-747, Cys-750, His-763, His-767, Cys-775, Cys-778, His-791, His-795, Cys-803, Cys-806, His-819, His-823, Cys-831, Cys-834, and His-847. The interval 755–845 (VHSGQLNVHL…KSFTRRYHLT (91 aa)) is DNA-binding.

This sequence belongs to the class V-like SAM-binding methyltransferase superfamily. As to quaternary structure, homodimer. Post-translationally, mono-methylated; automethylated. Tri-methylated; automethylated.

It localises to the nucleus. The protein resides in the chromosome. The enzyme catalyses L-lysyl-[protein] + S-adenosyl-L-methionine = N(6)-methyl-L-lysyl-[protein] + S-adenosyl-L-homocysteine + H(+). It catalyses the reaction N(6)-methyl-L-lysyl-[protein] + S-adenosyl-L-methionine = N(6),N(6)-dimethyl-L-lysyl-[protein] + S-adenosyl-L-homocysteine + H(+). It carries out the reaction L-lysyl(4)-[histone H3] + 3 S-adenosyl-L-methionine = N(6),N(6),N(6)-trimethyl-L-lysyl(4)-[histone H3] + 3 S-adenosyl-L-homocysteine + 3 H(+). The catalysed reaction is L-lysyl(36)-[histone H3] + 3 S-adenosyl-L-methionine = N(6),N(6),N(6)-trimethyl-L-lysyl(36)-[histone H3] + 3 S-adenosyl-L-homocysteine + 3 H(+). The enzyme catalyses L-lysyl(9)-[histone H3] + 3 S-adenosyl-L-methionine = N(6),N(6),N(6)-trimethyl-L-lysyl(9)-[histone H3] + 3 S-adenosyl-L-homocysteine + 3 H(+). It catalyses the reaction L-lysyl(20)-[histone H4] + S-adenosyl-L-methionine = N(6)-methyl-L-lysyl(20)-[histone H4] + S-adenosyl-L-homocysteine + H(+). It carries out the reaction N(6)-methyl-L-lysyl(20)-[histone H4] + S-adenosyl-L-methionine = N(6),N(6)-dimethyl-L-lysyl(20)-[histone H4] + S-adenosyl-L-homocysteine + H(+). Functionally, histone methyltransferase that sequentially mono-, di-, and tri-methylates both 'Lys-4' (H3K4) and 'Lys-36' (H3K36) of histone H3 to produce respectively trimethylated 'Lys-4' (H3K4me3) and trimethylated 'Lys-36' (H3K36me3) histone H3 and plays a key role in meiotic prophase by determining hotspot localization thereby promoting meiotic recombination. Can also methylate all four core histones with H3 being the best substrate and the most highly modified. Is also able, on one hand, to mono and di-methylate H4K20 and on other hand to trimethylate H3K9 with the di-methylated H3K9 as the best substrate. During meiotic prophase, binds specific DNA sequences through its zinc finger domains thereby determining hotspot localization where it promotes local H3K4me3 and H3K36me3 enrichment on the same nucleosomes through its histone methyltransferase activity. Thereby promotes double-stranded breaks (DSB) formation, at this subset of PRDM9-binding sites, that initiates meiotic recombination for the proper meiotic progression. During meiotic progression hotspot-bound PRDM9 interacts with several complexes; in early leptonema binds CDYL and EHMT2 followed by EWSR1 and CXXC1 by the end of leptonema. EWSR1 joins PRDM9 with the chromosomal axis through REC8. In this way, controls the DSB repair pathway, pairing of homologous chromosomes and sex body formation. Moreover plays a central role in the transcriptional activation of genes during early meiotic prophase thanks to H3K4me3 and H3K36me3 enrichment that represents a specific tag for epigenetic transcriptional activation. In addition performs automethylation. Acetylation and phosphorylation of histone H3 attenuate or prevent histone H3 methylation. The sequence is that of Histone-lysine N-methyltransferase PRDM9 (prdm9) from Danio rerio (Zebrafish).